The following is a 256-amino-acid chain: 3-methyl-2-oxobutanoate hydroxymethyltransferase (256 aa).

Residues Asp-42 and Asp-86 each coordinate Mg(2+). 3-methyl-2-oxobutanoate is bound by residues 42–43, Asp-86, and Lys-116; that span reads DS. Glu-118 contacts Mg(2+). Catalysis depends on Glu-185, which acts as the Proton acceptor.

Belongs to the PanB family. As to quaternary structure, homodecamer; pentamer of dimers. It depends on Mg(2+) as a cofactor.

It is found in the cytoplasm. It carries out the reaction 3-methyl-2-oxobutanoate + (6R)-5,10-methylene-5,6,7,8-tetrahydrofolate + H2O = 2-dehydropantoate + (6S)-5,6,7,8-tetrahydrofolate. The protein operates within cofactor biosynthesis; (R)-pantothenate biosynthesis; (R)-pantoate from 3-methyl-2-oxobutanoate: step 1/2. In terms of biological role, catalyzes the reversible reaction in which hydroxymethyl group from 5,10-methylenetetrahydrofolate is transferred onto alpha-ketoisovalerate to form ketopantoate. This Prochlorococcus marinus (strain SARG / CCMP1375 / SS120) protein is 3-methyl-2-oxobutanoate hydroxymethyltransferase.